A 1034-amino-acid chain; its full sequence is Mediator of RNA polymerase II transcription subunit 15 (1034 aa).

Composition is skewed to low complexity over residues 101–123, 138–149, 157–183, 281–312, 413–441, 459–490, and 655–675; these read QRQQQQQQQQHHMQQQGSGQQQA, QQAQARQQAQRQ, QQQQQPMPQQPQPQQQQPNMMRPQLTL, MNQVPQQQQQVRQQQQQQQQQQQQQHKQQPQH, QQIPQVQQAPLQQPQVQPPQSQQAQSRRQ, PQPQQTPQNIQQPMMQQQSSPPPQQQQQQQQQ, and QSQTQEPPQIAAQQQQPQQPI. Disordered regions lie at residues 101–124, 138–183, 281–315, 413–497, 655–682, 712–804, and 951–1020; these read QRQQQQQQQQHHMQQQGSGQQQAN, QQAQ…QLTL, MNQVPQQQQQVRQQQQQQQQQQQQQHKQQPQHQEP, QQIP…SVPR, QSQTQEPPQIAAQQQQPQQPISGVNNNS, SAIS…NPYK, and ISPT…ESTD. 2 stretches are compositionally biased toward polar residues: residues 738–764 and 772–802; these read NSQSGIPTSNPQSNSNASVVNSRTATP and PMFNNKSLASGQQNSPSPKTMINSPPQQDNP. The segment covering 962–971 has biased composition (basic and acidic residues); sequence SESKKVKFDS. Positions 998–1020 are enriched in polar residues; the sequence is SINSKPSIPSSAGNMPAPNESTD.

Belongs to the Mediator complex subunit 15 family. Component of the Mediator complex.

It is found in the nucleus. Component of the Mediator complex, a coactivator involved in the regulated transcription of nearly all RNA polymerase II-dependent genes. Mediator functions as a bridge to convey information from gene-specific regulatory proteins to the basal RNA polymerase II transcription machinery. Mediator is recruited to promoters by direct interactions with regulatory proteins and serves as a scaffold for the assembly of a functional preinitiation complex with RNA polymerase II and the general transcription factors. Required for transcription of genes encoding galactose-metabolizing enzymes. Essential for normal growth on nonfermentable carbon sources, for sporulation and mating. The chain is Mediator of RNA polymerase II transcription subunit 15 (GAL11) from Kluyveromyces lactis (strain ATCC 8585 / CBS 2359 / DSM 70799 / NBRC 1267 / NRRL Y-1140 / WM37) (Yeast).